The primary structure comprises 358 residues: 4-hydroxy-3-methylbut-2-en-1-yl diphosphate synthase (flavodoxin) (358 aa).

[4Fe-4S] cluster is bound by residues cysteine 270, cysteine 273, cysteine 305, and glutamate 312.

The protein belongs to the IspG family. [4Fe-4S] cluster is required as a cofactor.

The catalysed reaction is (2E)-4-hydroxy-3-methylbut-2-enyl diphosphate + oxidized [flavodoxin] + H2O + 2 H(+) = 2-C-methyl-D-erythritol 2,4-cyclic diphosphate + reduced [flavodoxin]. It participates in isoprenoid biosynthesis; isopentenyl diphosphate biosynthesis via DXP pathway; isopentenyl diphosphate from 1-deoxy-D-xylulose 5-phosphate: step 5/6. Converts 2C-methyl-D-erythritol 2,4-cyclodiphosphate (ME-2,4cPP) into 1-hydroxy-2-methyl-2-(E)-butenyl 4-diphosphate. The protein is 4-hydroxy-3-methylbut-2-en-1-yl diphosphate synthase (flavodoxin) of Vesicomyosocius okutanii subsp. Calyptogena okutanii (strain HA).